A 329-amino-acid chain; its full sequence is Beta-tectorin (329 aa).

An N-terminal signal peptide occupies residues 1–17 (MVVRAFVLLALFAEASA). In terms of domain architecture, ZP spans 19 to 283 (SCTPNKADVI…LSCPVNCDKR (265 aa)). 4 N-linked (GlcNAc...) asparagine glycosylation sites follow: Asn-80, Asn-104, Asn-116, and Asn-145. Cys-204 and Cys-264 are disulfide-bonded. Ala-305 is lipidated: GPI-anchor amidated alanine. The propeptide at 306–329 (FSGLCDFSDVLLHLILMLGTWAVL) is removed in mature form.

As to quaternary structure, may form homomeric filament after self-association or heteromeric filament after association with alpha-tectorin. Interacts with CEACAM16. Post-translationally, the presence of a hydrophobic C-terminus preceded by a potential cleavage site strongly suggests that tectorins are synthesized as glycosylphosphatidylinositol-linked, membrane-bound precursors. Tectorins are targeted to the apical surface of the inner ear epithelia by the lipid and proteolytically released into the extracellular compartment.

It localises to the cell membrane. It is found in the secreted. The protein localises to the extracellular space. The protein resides in the extracellular matrix. In terms of biological role, one of the major non-collagenous components of the tectorial membrane. The tectorial membrane is an extracellular matrix of the inner ear that covers the neuroepithelium of the cochlea and contacts the stereocilia bundles of specialized sensory hair cells. Sound induces movement of these hair cells relative to the tectorial membrane, deflects the stereocilia and leads to fluctuations in hair-cell membrane potential, transducing sound into electrical signals. The chain is Beta-tectorin (Tectb) from Mus musculus (Mouse).